Reading from the N-terminus, the 168-residue chain is Lipoprotein signal peptidase (168 aa).

The next 2 helical transmembrane spans lie at 57 to 77 (PKEVMILLVGTISLLIALYVF) and 86 to 106 (FILPFALVFGGGVGNMIDRIT). Residues D112 and D138 contribute to the active site. Residues 131–151 (WPIFNIADSAITIGACLLILF) traverse the membrane as a helical segment.

The protein belongs to the peptidase A8 family.

The protein localises to the cell inner membrane. The enzyme catalyses Release of signal peptides from bacterial membrane prolipoproteins. Hydrolyzes -Xaa-Yaa-Zaa-|-(S,diacylglyceryl)Cys-, in which Xaa is hydrophobic (preferably Leu), and Yaa (Ala or Ser) and Zaa (Gly or Ala) have small, neutral side chains.. Its pathway is protein modification; lipoprotein biosynthesis (signal peptide cleavage). In terms of biological role, this protein specifically catalyzes the removal of signal peptides from prolipoproteins. The chain is Lipoprotein signal peptidase from Chlorobium phaeobacteroides (strain DSM 266 / SMG 266 / 2430).